The chain runs to 391 residues: N-acetylaspartylglutamate synthase A (391 aa).

The ATP-grasp domain maps to 115–300; the sequence is FQELAGHGVP…VGGIIADYTM (186 aa). Residues K154, 189–199, and R215 each bind ATP; that span reads QKYVKESHGKD. Mg(2+) is bound by residues D260, E273, and N275. Residues D260, E273, and N275 each contribute to the Mn(2+) site. S319 bears the Phosphoserine mark. Residues 341–350 are compositionally biased toward polar residues; it reads TINSGSTSSE. The interval 341-379 is disordered; the sequence is TINSGSTSSESEPELGEIRDSSASTMGAPPSMLPEPGYN.

This sequence belongs to the RimK family. Mg(2+) serves as cofactor. Requires Mn(2+) as cofactor.

The protein resides in the cytoplasm. The catalysed reaction is N-acetyl-L-aspartate + L-glutamate + ATP = N-acetyl-L-aspartyl-L-glutamate + ADP + phosphate + H(+). The enzyme catalyses N-acetyl-L-aspartate + 2 L-glutamate + 2 ATP = N-acetyl-L-aspartyl-L-glutamyl-L-glutamate + 2 ADP + 2 phosphate + 2 H(+). Its function is as follows. Catalyzes the synthesis of N-acetyl-L-aspartyl-L-glutamate (NAAG) and N-acetyl-L-aspartyl-L-glutamyl-L-glutamate. The sequence is that of N-acetylaspartylglutamate synthase A (RIMKLA) from Homo sapiens (Human).